The primary structure comprises 116 residues: Ribonuclease P protein component (116 aa).

The protein belongs to the RnpA family. In terms of assembly, consists of a catalytic RNA component (M1 or rnpB) and a protein subunit.

The enzyme catalyses Endonucleolytic cleavage of RNA, removing 5'-extranucleotides from tRNA precursor.. Its function is as follows. RNaseP catalyzes the removal of the 5'-leader sequence from pre-tRNA to produce the mature 5'-terminus. It can also cleave other RNA substrates such as 4.5S RNA. The protein component plays an auxiliary but essential role in vivo by binding to the 5'-leader sequence and broadening the substrate specificity of the ribozyme. The chain is Ribonuclease P protein component from Exiguobacterium sibiricum (strain DSM 17290 / CCUG 55495 / CIP 109462 / JCM 13490 / 255-15).